A 387-amino-acid polypeptide reads, in one-letter code: Acetylserotonin O-methyltransferase (387 aa).

S-adenosyl-L-methionine is bound by residues tyrosine 153, tryptophan 170, glutamate 216, 246–248, and arginine 263; that span reads GDF. Histidine 266 serves as the catalytic Proton donor/acceptor. Residues aspartate 267 and glutamine 317 each contribute to the substrate site. The segment at 355 to 387 is disordered; it reads ARGGGAGARSDGGGGEATSQTGSGTGREVGAQD. The span at 356-370 shows a compositional bias: gly residues; that stretch reads RGGGAGARSDGGGGE.

The protein belongs to the class I-like SAM-binding methyltransferase superfamily. Cation-independent O-methyltransferase family. In terms of assembly, homodimer.

The enzyme catalyses N-acetylserotonin + S-adenosyl-L-methionine = melatonin + S-adenosyl-L-homocysteine + H(+). The protein operates within aromatic compound metabolism; melatonin biosynthesis; melatonin from serotonin: step 1/2. Its function is as follows. Catalyzes the transfer of a methyl group onto N-acetylserotonin, producing melatonin (N-acetyl-5-methoxytryptamine). This is Acetylserotonin O-methyltransferase (Asmt) from Mus musculus molossinus (Japanese house mouse).